The chain runs to 88 residues: Phosphoribosyl-ATP pyrophosphatase (88 aa).

This sequence belongs to the PRA-PH family.

Its subcellular location is the cytoplasm. It catalyses the reaction 1-(5-phospho-beta-D-ribosyl)-ATP + H2O = 1-(5-phospho-beta-D-ribosyl)-5'-AMP + diphosphate + H(+). It participates in amino-acid biosynthesis; L-histidine biosynthesis; L-histidine from 5-phospho-alpha-D-ribose 1-diphosphate: step 2/9. This Cutibacterium acnes (strain DSM 16379 / KPA171202) (Propionibacterium acnes) protein is Phosphoribosyl-ATP pyrophosphatase.